A 981-amino-acid chain; its full sequence is RNA polymerase II assembly factor RTP1 (981 aa).

HEAT repeat units follow at residues 64–101 (SNNN…LLPI), 161–199 (DTLS…ILLG), 226–261 (YTLF…RRPE), 366–403 (KELN…TTPG), 609–646 (KDVL…GEET), 655–692 (SSYK…KLQS), 765–799 (ISLE…LCEL), 800–836 (EPET…NYIQ), and 945–980 (EYNY…VLDS). Positions 630–651 (QEVEADSDDEVEEGEETEELDP) are enriched in acidic residues. A disordered region spans residues 630–652 (QEVEADSDDEVEEGEETEELDPN).

The protein belongs to the Tango6 family. In terms of assembly, interacts with RNA polymerase II subunits RPB2 and RPB3. Interacts with the R2TP complex. Interacts with the nuclear pore complex subunits NUP100 and NUP116.

The protein resides in the cytoplasm. Required for the cytoplasmic assembly and the nuclear import of RNA polymerase II. May facilitate the starting interaction between RNA polymerase II subunits RPB2 and RPB3 and the subsequent interaction of the resulting complex with subunit RPB1. May also participate in the transport of RNA polymerase II through the nuclear pore complex. In Saccharomyces cerevisiae (strain ATCC 204508 / S288c) (Baker's yeast), this protein is RNA polymerase II assembly factor RTP1.